The primary structure comprises 533 residues: CWF19-like protein 1 homolog (533 aa).

A disordered region spans residues 290-314; that stretch reads EMGGAEDGAGNGRKRHNDGGNDGPR.

This sequence belongs to the CWF19 family.

The polypeptide is CWF19-like protein 1 homolog (Caenorhabditis elegans).